A 336-amino-acid chain; its full sequence is Casein kinase II subunit alpha (336 aa).

One can recognise a Protein kinase domain in the interval 37 to 322; the sequence is YQLVRKLGRG…AREAMAHPYF (286 aa). ATP-binding positions include 43-51 and Lys-66; that span reads LGRGKYSEV. The active-site Proton acceptor is Asp-154.

It belongs to the protein kinase superfamily. Ser/Thr protein kinase family. CK2 subfamily. In terms of assembly, tetramer of two alpha and two beta chains. Mg(2+) serves as cofactor.

It is found in the nucleus. It localises to the nucleolus. The catalysed reaction is L-seryl-[protein] + ATP = O-phospho-L-seryl-[protein] + ADP + H(+). It catalyses the reaction L-threonyl-[protein] + ATP = O-phospho-L-threonyl-[protein] + ADP + H(+). Functionally, casein kinases are operationally defined by their preferential utilization of acidic proteins such as caseins as substrates. The alpha chain contains the catalytic site. May participate in Wnt signaling. The polypeptide is Casein kinase II subunit alpha (CkIIalpha) (Drosophila melanogaster (Fruit fly)).